We begin with the raw amino-acid sequence, 279 residues long: Thioredoxin domain-containing protein plp1 (279 aa).

Residues 56-70 (RKEDTQDYNEPELHN) are compositionally biased toward basic and acidic residues. A disordered region spans residues 56 to 75 (RKEDTQDYNEPELHNSNDPT). The Thioredoxin domain maps to 137-248 (FLTVENEREV…LEFRLLKSSA (112 aa)). Basic and acidic residues predominate over residues 254–267 (EESSSNKSIYHDEL). A disordered region spans residues 254–279 (EESSSNKSIYHDELQNNQSDDSDFFE). Ser272 and Ser275 each carry phosphoserine.

It belongs to the phosducin family.

Its subcellular location is the cytoplasm. It is found in the nucleus. Its function is as follows. Inhibits early G-protein signaling events following pheromone stimulation. May help create heterodimerizable beta-tubulin by facilitating the efficient transfer of nascent beta-tubulin polypeptides to the folding apparatus. The polypeptide is Thioredoxin domain-containing protein plp1 (plp1) (Schizosaccharomyces pombe (strain 972 / ATCC 24843) (Fission yeast)).